The sequence spans 1047 residues: Carbamoyl phosphate synthase large chain (1047 aa).

The carboxyphosphate synthetic domain stretch occupies residues 1–398 (MPRRDDIHRI…ALMKAIASLD (398 aa)). Residues Arg-129, Arg-169, Gly-175, Gly-176, Glu-208, Leu-210, Glu-215, Gly-241, Val-242, His-243, Gln-284, and Glu-296 each contribute to the ATP site. The region spanning 133-325 (YEFLKAMGEP…IARIAAKIAA (193 aa)) is the ATP-grasp 1 domain. Mg(2+) is bound by residues Gln-284, Glu-296, and Asn-298. 3 residues coordinate Mn(2+): Gln-284, Glu-296, and Asn-298. The segment at 399–539 (NAFSSNIRLH…YSTYEDEDET (141 aa)) is oligomerization domain. The segment at 540 to 916 (PDLSGSIMII…ALRKSLQRSI (377 aa)) is carbamoyl phosphate synthetic domain. Residues 665–854 (SRVIEGLGIK…WVRLAVECMI (190 aa)) form the ATP-grasp 2 domain. Arg-701, Lys-738, Leu-740, Glu-745, Gly-770, Val-771, His-772, Ser-773, Gln-813, and Glu-825 together coordinate ATP. Mg(2+) contacts are provided by Gln-813, Glu-825, and Asn-827. Mn(2+) contacts are provided by Gln-813, Glu-825, and Asn-827. The 138-residue stretch at 910-1047 (KSLQRSISSV…REIGDYLQVS (138 aa)) folds into the MGS-like domain. Residues 916 to 1047 (ISSVLITVRD…REIGDYLQVS (132 aa)) form an allosteric domain region.

The protein belongs to the CarB family. Composed of two chains; the small (or glutamine) chain promotes the hydrolysis of glutamine to ammonia, which is used by the large (or ammonia) chain to synthesize carbamoyl phosphate. Tetramer of heterodimers (alpha,beta)4. The cofactor is Mg(2+). Mn(2+) serves as cofactor.

The enzyme catalyses hydrogencarbonate + L-glutamine + 2 ATP + H2O = carbamoyl phosphate + L-glutamate + 2 ADP + phosphate + 2 H(+). The catalysed reaction is hydrogencarbonate + NH4(+) + 2 ATP = carbamoyl phosphate + 2 ADP + phosphate + 2 H(+). It functions in the pathway amino-acid biosynthesis; L-arginine biosynthesis; carbamoyl phosphate from bicarbonate: step 1/1. Its pathway is pyrimidine metabolism; UMP biosynthesis via de novo pathway; (S)-dihydroorotate from bicarbonate: step 1/3. In terms of biological role, large subunit of the glutamine-dependent carbamoyl phosphate synthetase (CPSase). CPSase catalyzes the formation of carbamoyl phosphate from the ammonia moiety of glutamine, carbonate, and phosphate donated by ATP, constituting the first step of 2 biosynthetic pathways, one leading to arginine and/or urea and the other to pyrimidine nucleotides. The large subunit (synthetase) binds the substrates ammonia (free or transferred from glutamine from the small subunit), hydrogencarbonate and ATP and carries out an ATP-coupled ligase reaction, activating hydrogencarbonate by forming carboxy phosphate which reacts with ammonia to form carbamoyl phosphate. This is Carbamoyl phosphate synthase large chain from Thermoplasma acidophilum (strain ATCC 25905 / DSM 1728 / JCM 9062 / NBRC 15155 / AMRC-C165).